Here is a 275-residue protein sequence, read N- to C-terminus: Bis(5'-nucleosyl)-tetraphosphatase, symmetrical (275 aa).

Belongs to the Ap4A hydrolase family.

It carries out the reaction P(1),P(4)-bis(5'-adenosyl) tetraphosphate + H2O = 2 ADP + 2 H(+). Functionally, hydrolyzes diadenosine 5',5'''-P1,P4-tetraphosphate to yield ADP. The chain is Bis(5'-nucleosyl)-tetraphosphatase, symmetrical from Actinobacillus succinogenes (strain ATCC 55618 / DSM 22257 / CCUG 43843 / 130Z).